A 62-amino-acid chain; its full sequence is Ferredoxin-2 (62 aa).

4Fe-4S ferredoxin-type domains follow at residues 2-28 (AHRI…SAGD) and 29-62 (SIYV…IIKV). [4Fe-4S] cluster is bound by residues Cys9, Cys12, Cys15, Cys19, Cys38, Cys41, Cys50, and Cys54.

[4Fe-4S] cluster serves as cofactor.

Functionally, ferredoxins are iron-sulfur proteins that transfer electrons in a wide variety of metabolic reactions. This Chlorobaculum tepidum (strain ATCC 49652 / DSM 12025 / NBRC 103806 / TLS) (Chlorobium tepidum) protein is Ferredoxin-2.